The following is a 242-amino-acid chain: Probable transcriptional regulatory protein EUBREC_1961 (242 aa).

This sequence belongs to the TACO1 family.

It localises to the cytoplasm. This Agathobacter rectalis (strain ATCC 33656 / DSM 3377 / JCM 17463 / KCTC 5835 / VPI 0990) (Eubacterium rectale) protein is Probable transcriptional regulatory protein EUBREC_1961.